A 154-amino-acid polypeptide reads, in one-letter code: Ribonuclease H (154 aa).

Positions 1-142 (MRKQVEIFTD…CDELARAAAG (142 aa)) constitute an RNase H type-1 domain. 4 residues coordinate Mg(2+): D10, E48, D70, and D134.

The protein belongs to the RNase H family. In terms of assembly, monomer. Requires Mg(2+) as cofactor.

The protein resides in the cytoplasm. It carries out the reaction Endonucleolytic cleavage to 5'-phosphomonoester.. Its function is as follows. Endonuclease that specifically degrades the RNA of RNA-DNA hybrids. The protein is Ribonuclease H of Pectobacterium carotovorum subsp. carotovorum (strain PC1).